We begin with the raw amino-acid sequence, 344 residues long: Fructose-1,6-bisphosphatase class 1 (344 aa).

Mg(2+) contacts are provided by Glu-92, Asp-115, Leu-117, and Asp-118. Residues 118-121, Asn-211, Tyr-244, and Lys-274 each bind substrate; that span reads DGSS. Glu-280 is a Mg(2+) binding site.

This sequence belongs to the FBPase class 1 family. As to quaternary structure, homotetramer. The cofactor is Mg(2+).

Its subcellular location is the cytoplasm. The catalysed reaction is beta-D-fructose 1,6-bisphosphate + H2O = beta-D-fructose 6-phosphate + phosphate. It functions in the pathway carbohydrate biosynthesis; gluconeogenesis. In Aeromonas hydrophila subsp. hydrophila (strain ATCC 7966 / DSM 30187 / BCRC 13018 / CCUG 14551 / JCM 1027 / KCTC 2358 / NCIMB 9240 / NCTC 8049), this protein is Fructose-1,6-bisphosphatase class 1.